Reading from the N-terminus, the 142-residue chain is Large ribosomal subunit protein uL11 (142 aa).

Belongs to the universal ribosomal protein uL11 family. In terms of assembly, part of the ribosomal stalk of the 50S ribosomal subunit. Interacts with L10 and the large rRNA to form the base of the stalk. L10 forms an elongated spine to which L12 dimers bind in a sequential fashion forming a multimeric L10(L12)X complex. One or more lysine residues are methylated.

Forms part of the ribosomal stalk which helps the ribosome interact with GTP-bound translation factors. The polypeptide is Large ribosomal subunit protein uL11 (Solibacter usitatus (strain Ellin6076)).